We begin with the raw amino-acid sequence, 469 residues long: Actin-related protein 4 (469 aa).

The disordered stretch occupies residues 104–136 (PERSTPPSKKGINISDDGDVPMEDDGNNNEDAT). Over residues 119 to 136 (DDGDVPMEDDGNNNEDAT) the composition is skewed to acidic residues.

The protein belongs to the actin family. ARP4 subfamily. In terms of assembly, component of the NuA4 histone acetyltransferase complex, of the INO80 chromatin remodeling complex, and of the SWR1 chromatin remodeling complex.

It localises to the nucleus. Functionally, chromatin interaction component of the NuA4 histone acetyltransferase complex which is involved in transcriptional activation of selected genes principally by acetylation of nucleosomal histone H4 and H2A. The NuA4 complex is also involved in DNA repair. Is required for NuA4 complex integrity. Component of the SWR1 complex which mediates the ATP-dependent exchange of histone H2A for the H2A variant H2A.Z leading to transcriptional regulation of selected genes by chromatin remodeling. Component of the INO80 complex which remodels chromatin by shifting nucleosomes and is involved in DNA repair. This is Actin-related protein 4 (arp-4) from Neurospora crassa (strain ATCC 24698 / 74-OR23-1A / CBS 708.71 / DSM 1257 / FGSC 987).